A 285-amino-acid chain; its full sequence is Putative lipoprotein SCO4650 (285 aa).

Residues 1–20 (MTGTTARRTVVSVAVSAALA) form the signal peptide. Cys21 carries N-palmitoyl cysteine lipidation. A lipid anchor (S-diacylglycerol cysteine) is attached at Cys21. The segment at 27–63 (GPGGSDDAGHSTGPTGSARPSASAPASSRAPALTGPS) is disordered. Low complexity predominate over residues 43–58 (SARPSASAPASSRAPA).

The protein resides in the cell membrane. The protein is Putative lipoprotein SCO4650 of Streptomyces coelicolor (strain ATCC BAA-471 / A3(2) / M145).